The following is a 251-amino-acid chain: Cytochrome c oxidase subunit 2 (251 aa).

An N-terminal signal peptide occupies residues 1 to 15; the sequence is MLTFLSNLNNMIIMN. The Mitochondrial intermembrane segment spans residues 16–42; sequence DVPTPYGVYFQDSATPNQEGILELHDN. The helical transmembrane segment at 43–64 threads the bilayer; the sequence is IMFYLLVILGLVSWLLFTITRT. Residues 65 to 82 lie on the Mitochondrial matrix side of the membrane; that stretch reads YSKNPIAYKYIKHGQTIE. A helical membrane pass occupies residues 83 to 107; the sequence is IIWTIFPAVVLLIIAFPSFILLYLC. Residues 108 to 251 are Mitochondrial intermembrane-facing; it reads DEVISPAMTI…PSFLEWLNEQ (144 aa). Cu cation contacts are provided by histidine 186, cysteine 221, glutamate 223, cysteine 225, histidine 229, and methionine 232. Glutamate 223 lines the Mg(2+) pocket.

It belongs to the cytochrome c oxidase subunit 2 family. As to quaternary structure, component of the cytochrome c oxidase (complex IV, CIV), a multisubunit enzyme composed of a catalytic core of 3 subunits and several supernumerary subunits. The complex exists as a monomer or a dimer and forms supercomplexes (SCs) in the inner mitochondrial membrane with ubiquinol-cytochrome c oxidoreductase (cytochrome b-c1 complex, complex III, CIII). Requires Cu cation as cofactor. In terms of processing, the signal sequence of COX2 is processed by IMP1.

Its subcellular location is the mitochondrion inner membrane. It carries out the reaction 4 Fe(II)-[cytochrome c] + O2 + 8 H(+)(in) = 4 Fe(III)-[cytochrome c] + 2 H2O + 4 H(+)(out). Functionally, component of the cytochrome c oxidase, the last enzyme in the mitochondrial electron transport chain which drives oxidative phosphorylation. The respiratory chain contains 3 multisubunit complexes succinate dehydrogenase (complex II, CII), ubiquinol-cytochrome c oxidoreductase (cytochrome b-c1 complex, complex III, CIII) and cytochrome c oxidase (complex IV, CIV), that cooperate to transfer electrons derived from NADH and succinate to molecular oxygen, creating an electrochemical gradient over the inner membrane that drives transmembrane transport and the ATP synthase. Cytochrome c oxidase is the component of the respiratory chain that catalyzes the reduction of oxygen to water. Electrons originating from reduced cytochrome c in the intermembrane space (IMS) are transferred via the dinuclear copper A center (CU(A)) of subunit 2 and heme A of subunit 1 to the active site in subunit 1, a binuclear center (BNC) formed by heme A3 and copper B (CU(B)). The BNC reduces molecular oxygen to 2 water molecules using 4 electrons from cytochrome c in the IMS and 4 protons from the mitochondrial matrix. The sequence is that of Cytochrome c oxidase subunit 2 (COX2) from Lachancea kluyveri (strain ATCC 58438 / CBS 3082 / BCRC 21498 / NBRC 1685 / JCM 7257 / NCYC 543 / NRRL Y-12651) (Yeast).